Here is a 337-residue protein sequence, read N- to C-terminus: Phenylalanine--tRNA ligase alpha subunit (337 aa).

Glutamate 258 is a binding site for Mg(2+).

Belongs to the class-II aminoacyl-tRNA synthetase family. Phe-tRNA synthetase alpha subunit type 1 subfamily. As to quaternary structure, tetramer of two alpha and two beta subunits. It depends on Mg(2+) as a cofactor.

The protein resides in the cytoplasm. The enzyme catalyses tRNA(Phe) + L-phenylalanine + ATP = L-phenylalanyl-tRNA(Phe) + AMP + diphosphate + H(+). The sequence is that of Phenylalanine--tRNA ligase alpha subunit from Burkholderia vietnamiensis (strain G4 / LMG 22486) (Burkholderia cepacia (strain R1808)).